Reading from the N-terminus, the 126-residue chain is Small ribosomal subunit protein eS6 (126 aa).

This sequence belongs to the eukaryotic ribosomal protein eS6 family.

This Thermococcus sibiricus (strain DSM 12597 / MM 739) protein is Small ribosomal subunit protein eS6.